The chain runs to 204 residues: WW domain-containing protein C11B10.08 (204 aa).

One can recognise a WW domain in the interval 7–43; sequence EGLPNGWVAQWDERYKCYFYVNESDPKAKPQWECPVR. Residues 32-117 form a disordered region; sequence PKAKPQWECP…GYPQQPYYYP (86 aa). 2 stretches are compositionally biased toward low complexity: residues 66 to 100 and 108 to 117; these read YSNS…GAAP and GYPQQPYYYP.

Its subcellular location is the cytoplasm. It is found in the nucleus. The polypeptide is WW domain-containing protein C11B10.08 (Schizosaccharomyces pombe (strain 972 / ATCC 24843) (Fission yeast)).